Here is a 204-residue protein sequence, read N- to C-terminus: Recombination protein RecR (204 aa).

The C4-type zinc-finger motif lies at cysteine 61 to cysteine 76. Residues serine 84 to proline 183 form the Toprim domain.

This sequence belongs to the RecR family.

Functionally, may play a role in DNA repair. It seems to be involved in an RecBC-independent recombinational process of DNA repair. It may act with RecF and RecO. The protein is Recombination protein RecR of Polynucleobacter necessarius subsp. necessarius (strain STIR1).